The primary structure comprises 442 residues: Tryptophan synthase beta chain 2 (442 aa).

N6-(pyridoxal phosphate)lysine is present on Lys122.

It belongs to the TrpB family. Tetramer of two alpha and two beta chains. Pyridoxal 5'-phosphate is required as a cofactor.

The catalysed reaction is (1S,2R)-1-C-(indol-3-yl)glycerol 3-phosphate + L-serine = D-glyceraldehyde 3-phosphate + L-tryptophan + H2O. It functions in the pathway amino-acid biosynthesis; L-tryptophan biosynthesis; L-tryptophan from chorismate: step 5/5. In terms of biological role, the beta subunit is responsible for the synthesis of L-tryptophan from indole and L-serine. This Methanosarcina acetivorans (strain ATCC 35395 / DSM 2834 / JCM 12185 / C2A) protein is Tryptophan synthase beta chain 2 (trpB2).